Here is a 705-residue protein sequence, read N- to C-terminus: MSKQRIYEYAKELNLKSKEIIDELKSMNIEVSNHMQALEDDQIKALDKKFKKEQKNDNKQSTQNNHQKSNNQNQNKGQQKDNKKNQQQNNKGNKGNKKNNRNNKKNNKNNKPQNQPAAPKEIPSKVTYQEGITVGEFADKLNVESSEIIKKLFLLGIVANINQSLNQETIELIADDYGVEVEEEVVINEEDLSIYFEDEKDDPEAIERPAVVTIMGHVDHGKTTLLDSIRHTKVTAGEAGGITQHIGAYQIENDGKKITFLDTPGHAAFTTMRARGAQVTDITILVVAADDGVMPQTIEAINHAKEAEVPIIVAVNKIDKPTSNPDRVMQELTEYGLIPEDWGGETIFVPLSALSGDGIDDLLEMIGLVAEVQELKANPKNRAVGTVIEAELDKSRGPSASLLVQNGTLNVGDAIVVGNTYGRIRAMVNDLGQRIKTAGPSTPVEITGINDVPQAGDRFVVFSDEKQARRIGESRHEASIVQQRQESKNVSLDNLFEQMKQGEMKDLNVIIKGDVQGSVEALAASLMKIDVEGVNVRIIHTAVGAINESDVTLANASNGIIIGFNVRPDSGAKRAAEAENVDMRLHRVIYNVIEEIESAMKGLLDPEFEEQVIGQAEVRQTFKVSKVGTIAGCYVTEGKITRNAGVRIIRDGIVQYEGELDTLKRFKDDAKEVAKGYECGITIENYNDLKEGDVIEAFEMVEIKR.

A disordered region spans residues 40 to 124 (DDQIKALDKK…QPAAPKEIPS (85 aa)). The segment covering 41-58 (DQIKALDKKFKKEQKNDN) has biased composition (basic and acidic residues). Residues 59–77 (KQSTQNNHQKSNNQNQNKG) show a composition bias toward low complexity. The span at 94-108 (KGNKKNNRNNKKNNK) shows a compositional bias: basic residues. The tr-type G domain maps to 207–376 (ERPAVVTIMG…GLVAEVQELK (170 aa)). Residues 216–223 (GHVDHGKT) are G1. 216–223 (GHVDHGKT) contacts GTP. Residues 241-245 (GITQH) form a G2 region. Positions 262–265 (DTPG) are G3. GTP-binding positions include 262 to 266 (DTPGH) and 316 to 319 (NKID). A G4 region spans residues 316–319 (NKID). Residues 352–354 (SAL) are G5.

Belongs to the TRAFAC class translation factor GTPase superfamily. Classic translation factor GTPase family. IF-2 subfamily.

It localises to the cytoplasm. Its function is as follows. One of the essential components for the initiation of protein synthesis. Protects formylmethionyl-tRNA from spontaneous hydrolysis and promotes its binding to the 30S ribosomal subunits. Also involved in the hydrolysis of GTP during the formation of the 70S ribosomal complex. This Staphylococcus aureus (strain Mu3 / ATCC 700698) protein is Translation initiation factor IF-2.